A 224-amino-acid chain; its full sequence is Ribose-5-phosphate isomerase A (224 aa).

Substrate-binding positions include 34–37, 87–90, and 100–103; these read TGST, DGAD, and KGGG. E109 serves as the catalytic Proton acceptor. K127 serves as a coordination point for substrate.

This sequence belongs to the ribose 5-phosphate isomerase family. As to quaternary structure, homodimer.

The catalysed reaction is aldehydo-D-ribose 5-phosphate = D-ribulose 5-phosphate. The protein operates within carbohydrate degradation; pentose phosphate pathway; D-ribose 5-phosphate from D-ribulose 5-phosphate (non-oxidative stage): step 1/1. Catalyzes the reversible conversion of ribose-5-phosphate to ribulose 5-phosphate. The protein is Ribose-5-phosphate isomerase A of Francisella tularensis subsp. novicida (strain U112).